An 86-amino-acid chain; its full sequence is Small ribosomal subunit protein bS20 (86 aa).

The interval 1-22 (MANIKSQIKRIRTNERRRLRNQ) is disordered. A compositionally biased stretch (basic residues) spans 7–20 (QIKRIRTNERRRLR).

Belongs to the bacterial ribosomal protein bS20 family.

Functionally, binds directly to 16S ribosomal RNA. This Mycolicibacterium smegmatis (strain ATCC 700084 / mc(2)155) (Mycobacterium smegmatis) protein is Small ribosomal subunit protein bS20.